The sequence spans 179 residues: CASP-like protein 1F1 (179 aa).

The Cytoplasmic portion of the chain corresponds to 1 to 16 (MENVEDKYNSPLKSQK). The chain crosses the membrane as a helical span at residues 17–37 (LFIGAQICLRIVTIGATLAAT). Residues 38 to 65 (WIMVTDKQSITFGDFVMVAKYNYSSAFK) are Extracellular-facing. Residue asparagine 59 is glycosylated (N-linked (GlcNAc...) asparagine). Residues 66–86 (FFVLANVIACACSVVSLLFLC) traverse the membrane as a helical segment. The Cytoplasmic segment spans residues 87–105 (ALGRYSSNPGHVFLLFLHD). A helical membrane pass occupies residues 106–126 (LLMMSLVLAGCSAATAIGFLG). Topologically, residues 127 to 150 (KYGNTKSGWMPICDQFGQFCNRGT) are extracellular. Residues 151 to 171 (ISMMLSYLSMVCLLILTVTSA) form a helical membrane-spanning segment. Over 172-179 (NKSRQIHV) the chain is Cytoplasmic.

The protein belongs to the Casparian strip membrane proteins (CASP) family. In terms of assembly, homodimer and heterodimers.

The protein resides in the cell membrane. The polypeptide is CASP-like protein 1F1 (Ricinus communis (Castor bean)).